We begin with the raw amino-acid sequence, 502 residues long: Protein GIS3 (502 aa).

It localises to the cytoplasm. The protein resides in the nucleus. In Saccharomyces cerevisiae (strain ATCC 204508 / S288c) (Baker's yeast), this protein is Protein GIS3 (GIS3).